A 468-amino-acid chain; its full sequence is TFIIA-alpha and beta-like factor (468 aa).

Disordered regions lie at residues 215–236 (DRRL…LSLP) and 379–416 (DSVS…SEQD). Residues 380-391 (SVSNEDSTANSS) are compositionally biased toward polar residues. The segment covering 401 to 416 (PEEDPLNSGDDVSEQD) has biased composition (acidic residues).

It belongs to the TFIIA subunit 1 family. Testis specific. Expressed in pachytene spermatocytes and haploid spermatids.

The protein resides in the nucleus. May function as a testis specific transcription factor. Binds DNA in conjunction with GTF2A2 and TBP (the TATA-binding protein) and together with GTF2A2, allows mRNA transcription. In Mus musculus (Mouse), this protein is TFIIA-alpha and beta-like factor (Gtf2a1l).